Reading from the N-terminus, the 3259-residue chain is Golgin subfamily B member 1 (3259 aa).

N-acetylmethionine is present on M1. Topologically, residues 1–3235 are cytoplasmic; that stretch reads MLSRLSGLAN…LRSLCHSRTR (3235 aa). A phosphoserine mark is found at S6, S17, S138, and S528. A coiled-coil region spans residues 48–593; the sequence is EDVQERLAYA…RAEEADHEVL (546 aa). Positions 119 to 142 are disordered; sequence GTVLPTEPQSEEQLSKHDKSSTEE. Residues 131 to 142 show a composition bias toward basic and acidic residues; the sequence is QLSKHDKSSTEE. The segment at 624–652 is disordered; sequence LMPNEESSLPAVEKEQASTEHQSRTSEEI. The segment covering 635 to 650 has biased composition (basic and acidic residues); sequence VEKEQASTEHQSRTSE. Residue S653 is modified to Phosphoserine. 3 coiled-coil regions span residues 677–1028, 1062–1245, and 1301–1779; these read DIGQ…KEIP, LKQT…ESID, and GTSV…TEKH. Positions 944-963 are disordered; sequence AKKEQVEEDNEVSSGLKQNY. The segment covering 1747 to 1763 has biased composition (basic and acidic residues); sequence SEKDSLSEEVQDLKHQI. Residues 1747-1829 are disordered; sequence SEKDSLSEEV…SANPAVSKDF (83 aa). 2 stretches are compositionally biased toward polar residues: residues 1782 to 1794 and 1802 to 1820; these read QTNV…QSIP and SLSM…SAKS. A coiled-coil region spans residues 1828–3185; the sequence is DFSSHDEINN…EQIRRLEHSE (1358 aa). Phosphoserine is present on residues S2216, S2735, S2872, and S2884. The tract at residues 2856–2876 is disordered; sequence RKSEEGKQRSAAQPSTSPAEV. Residues 2865-2875 are compositionally biased toward polar residues; that stretch reads SAAQPSTSPAE. The interval 2998–3021 is disordered; that stretch reads TQPLKVQYQRQASPETSASPDGSQ. At S3037 the chain carries Phosphoserine. The interval 3107-3140 is disordered; it reads IDVAPGAPQEKNGVHRKSDPEELREPQQSFSEAQ. Positions 3118-3131 are enriched in basic and acidic residues; sequence NGVHRKSDPEELRE. The helical transmembrane segment at 3236 to 3256 threads the bilayer; the sequence is VPLLAAIYFLMIHVLLILCFT. The Lumenal segment spans residues 3257–3259; the sequence is GHL.

Homodimer; disulfide-linked. Interacts with PLK3.

The protein resides in the golgi apparatus membrane. In terms of biological role, may participate in forming intercisternal cross-bridges of the Golgi complex. The polypeptide is Golgin subfamily B member 1 (GOLGB1) (Homo sapiens (Human)).